Here is a 193-residue protein sequence, read N- to C-terminus: Ion-translocating oxidoreductase complex subunit A (193 aa).

A run of 6 helical transmembrane segments spans residues 5-25 (LLLFVGTVLVNNFVLVKFLGL), 39-59 (MGMGLATTFVMTLASICAWLI), 63-83 (ILIPLNLIYLRTLAFILVIAV), 102-122 (LLGIFLPLITTNCAVLGVALL), 134-154 (ALYGFSAAVGFSLVMVLFAAI), and 171-191 (AIALITAGLMSLAFMGFNGLV).

It belongs to the NqrDE/RnfAE family. As to quaternary structure, the complex is composed of six subunits: RsxA, RsxB, RsxC, RsxD, RsxE and RsxG.

It is found in the cell inner membrane. In terms of biological role, part of a membrane-bound complex that couples electron transfer with translocation of ions across the membrane. Required to maintain the reduced state of SoxR. In Shigella sonnei (strain Ss046), this protein is Ion-translocating oxidoreductase complex subunit A.